The chain runs to 207 residues: ATP-dependent Clp protease proteolytic subunit 1 (207 aa).

S103 acts as the Nucleophile in catalysis. H128 is an active-site residue.

It belongs to the peptidase S14 family. As to quaternary structure, fourteen ClpP subunits assemble into 2 heptameric rings which stack back to back to give a disk-like structure with a central cavity, resembling the structure of eukaryotic proteasomes.

It is found in the cytoplasm. The catalysed reaction is Hydrolysis of proteins to small peptides in the presence of ATP and magnesium. alpha-casein is the usual test substrate. In the absence of ATP, only oligopeptides shorter than five residues are hydrolyzed (such as succinyl-Leu-Tyr-|-NHMec, and Leu-Tyr-Leu-|-Tyr-Trp, in which cleavage of the -Tyr-|-Leu- and -Tyr-|-Trp bonds also occurs).. Functionally, cleaves peptides in various proteins in a process that requires ATP hydrolysis. Has a chymotrypsin-like activity. Plays a major role in the degradation of misfolded proteins. The protein is ATP-dependent Clp protease proteolytic subunit 1 of Synechococcus sp. (strain CC9605).